The following is an 89-amino-acid chain: Small ribosomal subunit protein uS15 (89 aa).

The protein belongs to the universal ribosomal protein uS15 family. Part of the 30S ribosomal subunit. Forms a bridge to the 50S subunit in the 70S ribosome, contacting the 23S rRNA.

Its function is as follows. One of the primary rRNA binding proteins, it binds directly to 16S rRNA where it helps nucleate assembly of the platform of the 30S subunit by binding and bridging several RNA helices of the 16S rRNA. Forms an intersubunit bridge (bridge B4) with the 23S rRNA of the 50S subunit in the ribosome. This is Small ribosomal subunit protein uS15 from Chlamydia pneumoniae (Chlamydophila pneumoniae).